A 141-amino-acid chain; its full sequence is Large ribosomal subunit protein uL11B/uL11C (141 aa).

Belongs to the universal ribosomal protein uL11 family. As to quaternary structure, part of the ribosomal stalk of the 50S ribosomal subunit. Interacts with L10 and the large rRNA to form the base of the stalk. L10 forms an elongated spine to which L12 dimers bind in a sequential fashion forming a multimeric L10(L12)X complex. Post-translationally, one or more lysine residues are methylated.

Functionally, forms part of the ribosomal stalk which helps the ribosome interact with GTP-bound translation factors. The chain is Large ribosomal subunit protein uL11B/uL11C from Bacillus cereus (strain ATCC 14579 / DSM 31 / CCUG 7414 / JCM 2152 / NBRC 15305 / NCIMB 9373 / NCTC 2599 / NRRL B-3711).